Consider the following 190-residue polypeptide: Subtilisin inhibitor CLSI-II (190 aa).

Disulfide bonds link cysteine 44–cysteine 88 and cysteine 142–cysteine 149.

Belongs to the protease inhibitor I3 (leguminous Kunitz-type inhibitor) family. In terms of assembly, forms active dimers on storage in aqueous solution, possibly through formation of an intermolecular disulfide bond. The N-terminal Asn is removed in about 50% of both the CLSI-II and CLSI-III chains.

The protein localises to the secreted. Inhibits subtilisin-type microbial serine proteases incuding proteinase K, subtilisin BPN', subtilisin Carlsberg and subtilisin E in a non-stoichiometric manner. Weakly inhibits A.oryzae protease and some metalloproteases including pronase E. Does not inhibit trypsin, chymotrypsin, S.griseus alkaline protease or A.lyticus lysyl endopeptidase. CLSI-II has a wider inhibitory specificity than CLSI-III. The chain is Subtilisin inhibitor CLSI-II from Canavalia lineata (Beach bean).